Reading from the N-terminus, the 117-residue chain is uncharacterized protein (117 aa).

A helical membrane pass occupies residues 10–32 (VCYLGDIAASGFLNSIATALIAV).

The protein resides in the membrane. This is an uncharacterized protein from Rickettsia conorii (strain ATCC VR-613 / Malish 7).